The chain runs to 122 residues: Large ribosomal subunit protein uL14 (122 aa).

The protein belongs to the universal ribosomal protein uL14 family. In terms of assembly, part of the 50S ribosomal subunit. Forms a cluster with proteins L3 and L19. In the 70S ribosome, L14 and L19 interact and together make contacts with the 16S rRNA in bridges B5 and B8.

Binds to 23S rRNA. Forms part of two intersubunit bridges in the 70S ribosome. In Clostridioides difficile (strain 630) (Peptoclostridium difficile), this protein is Large ribosomal subunit protein uL14.